A 141-amino-acid chain; its full sequence is Subtilase cytotoxin subunit B (141 aa).

The first 23 residues, 1–23, serve as a signal peptide directing secretion; that stretch reads MTIKRFFVCAGIMGCLSLNPAMA. N-glycoloyl-alpha-neuraminate is bound by residues 33–35 and Gln59; that span reads MFS. A hydrophobic patch important for binding to SubA region spans residues 89–94; sequence YFYTTG. Tyr101 contacts N-glycoloyl-alpha-neuraminate.

As to quaternary structure, forms a complex with SubA with the stoichiometry SubA1:SubB5 (called SubAB5). Each SubB subunit makes different contacts with the single SubA subunit. This subunit alone forms pentamers.

Its subcellular location is the secreted. It localises to the host cytoplasm. The protein localises to the host cytosol. It is found in the host endoplasmic reticulum lumen. Its function is as follows. Receptor-binding subunit of subtilase cytotoxin SubAB5. Required for receptor-binding and thus correct trafficking in the host cell. Has specificity for host glycans terminating in the sialic acid N-glycolyl-alpha-neuraminic acid (Neu5Gc); each subunit in the SubB pentamer binds one Neu5Gc. The protease subunit (SubA) cleaves host BiP/HSPA5, inducing the host endoplasmic reticulum stress response and eventual cell death. Culture supernatant of E.coli expressing both subA and subB are toxic for Vero cells (African green monkey kidney cell line), Chinese hamster ovary cells and Hct-8 cells (human colonic epithelial cell line); the subunits are not toxic individually. Purified SubAB5 is highly toxic, &lt;0.1 pg is able to kill at least 50% of 30'000 Vero cells in a microtiter plate assay after 3 days; no cytotoxicity is seen at 24 hours. Preabsorption with cells expressing a ganglioside GM2 mimic reduced cytotoxicity of SubAB5 by 93% in the Vero cytotoxicity assay. Intraperitoneal injection of 200 ng of purified SubAB5 kills mice; the higher the dose the faster the mice die. Animals injected with purified SubAB5 have microvascular thrombi in the brain and other organs, including the renal tubules and glomeruli. Mice fed E.coli cells expressing cloned SubAB5 experience drastic weight loss and appear ill and lethargic. SubB alone at 2.5 ug/ml causes vacuolation of Vero cells, which requires the V-type ATPase proton pump; treated cells die. Protein synthesis in Vero cells is transiently inhibited by SubAB5; both subunits are required for this effect. Inhibition of protein synthesis is prevented by brefeldin A; cells are arrested in the G1 phase. SubAB5 at 100 ng/ml induced caspase-dependent apoptosis in Vero cells through mitochondrial membrane damage. This chain is Subtilase cytotoxin subunit B, found in Escherichia coli.